The sequence spans 355 residues: NADH-quinone oxidoreductase subunit H (355 aa).

8 helical membrane passes run 25–45 (VVRILVVSVVILLCVAYLILW), 91–111 (WLYLIAPIMTVVPAFAVWAVI), 126–146 (LLYAMAISSIGVYAVILAGWA), 170–190 (MGFALVLVLMTAGSLNLSEIV), 205–225 (FLSWNWLPLLPAFVVYFISGI), 253–273 (MAFALFFLAEYINMIVISALA), 290–310 (FIPGIFWLVLKVFALLSVFIW), and 330–350 (VFLPVTVIWVVVVGCWMMSPL).

It belongs to the complex I subunit 1 family. As to quaternary structure, NDH-1 is composed of 14 different subunits. Subunits NuoA, H, J, K, L, M, N constitute the membrane sector of the complex.

The protein localises to the cell inner membrane. It carries out the reaction a quinone + NADH + 5 H(+)(in) = a quinol + NAD(+) + 4 H(+)(out). In terms of biological role, NDH-1 shuttles electrons from NADH, via FMN and iron-sulfur (Fe-S) centers, to quinones in the respiratory chain. The immediate electron acceptor for the enzyme in this species is believed to be ubiquinone. Couples the redox reaction to proton translocation (for every two electrons transferred, four hydrogen ions are translocated across the cytoplasmic membrane), and thus conserves the redox energy in a proton gradient. This subunit may bind ubiquinone. The chain is NADH-quinone oxidoreductase subunit H from Burkholderia cenocepacia (strain ATCC BAA-245 / DSM 16553 / LMG 16656 / NCTC 13227 / J2315 / CF5610) (Burkholderia cepacia (strain J2315)).